Consider the following 189-residue polypeptide: Phosphoheptose isomerase (189 aa).

The SIS domain maps to 34 to 189 (LVAALKGGKK…CDLVEKGLFK (156 aa)). 49 to 51 (NGG) is a binding site for substrate. Residues His-58 and Glu-62 each contribute to the Zn(2+) site. Substrate contacts are provided by residues Glu-62, 91–92 (ND), 117–119 (STS), Ser-122, and Gln-169. The Zn(2+) site is built by Gln-169 and His-177.

This sequence belongs to the SIS family. GmhA subfamily. Homotetramer. Requires Zn(2+) as cofactor.

It localises to the cytoplasm. The catalysed reaction is 2 D-sedoheptulose 7-phosphate = D-glycero-alpha-D-manno-heptose 7-phosphate + D-glycero-beta-D-manno-heptose 7-phosphate. It participates in carbohydrate biosynthesis; D-glycero-D-manno-heptose 7-phosphate biosynthesis; D-glycero-alpha-D-manno-heptose 7-phosphate and D-glycero-beta-D-manno-heptose 7-phosphate from sedoheptulose 7-phosphate: step 1/1. Its function is as follows. Catalyzes the isomerization of sedoheptulose 7-phosphate in D-glycero-D-manno-heptose 7-phosphate. This chain is Phosphoheptose isomerase, found in Geobacter metallireducens (strain ATCC 53774 / DSM 7210 / GS-15).